We begin with the raw amino-acid sequence, 31 residues long: Branched-chain-amino-acid aminotransferase, mitochondrial (31 aa).

The N-terminal 27 residues, 1–27 (MAAAALRQIWARKFLPVPWLLCGPRRY), are a transit peptide targeting the mitochondrion.

Belongs to the class-IV pyridoxal-phosphate-dependent aminotransferase family. In terms of assembly, homodimer. Pyridoxal 5'-phosphate is required as a cofactor.

It localises to the mitochondrion. The catalysed reaction is L-leucine + 2-oxoglutarate = 4-methyl-2-oxopentanoate + L-glutamate. It catalyses the reaction L-isoleucine + 2-oxoglutarate = (S)-3-methyl-2-oxopentanoate + L-glutamate. The enzyme catalyses L-valine + 2-oxoglutarate = 3-methyl-2-oxobutanoate + L-glutamate. Its function is as follows. Catalyzes the first reaction in the catabolism of the essential branched chain amino acids leucine, isoleucine, and valine. May also function as a transporter of branched chain alpha-keto acids. In Sus scrofa (Pig), this protein is Branched-chain-amino-acid aminotransferase, mitochondrial (BCAT2).